Reading from the N-terminus, the 489-residue chain is Carboxyl-terminal-processing peptidase 1, chloroplastic (489 aa).

A compositionally biased stretch (low complexity) spans 1 to 20; it reads MRLLLPFSSPLSATSSPSTP. The tract at residues 1–27 is disordered; sequence MRLLLPFSSPLSATSSPSTPQFIPELP. The PDZ domain occupies 189 to 273; sequence FSRMSKYDIT…TFVVLKVKHG (85 aa). Residues S403 and K428 each act as charge relay system in the active site.

This sequence belongs to the peptidase S41A family.

It localises to the plastid. The protein localises to the chloroplast thylakoid lumen. The catalysed reaction is The enzyme shows specific recognition of a C-terminal tripeptide, Xaa-Yaa-Zaa, in which Xaa is preferably Ala or Leu, Yaa is preferably Ala or Tyr, and Zaa is preferably Ala, but then cleaves at a variable distance from the C-terminus. A typical cleavage is -Ala-Ala-|-Arg-Ala-Ala-Lys-Glu-Asn-Tyr-Ala-Leu-Ala-Ala.. Protease involved in the C-terminal processing of the chloroplastic D1 protein of photosystem II. This proteolytic processing is necessary to allow the light-driven assembly of the tetranuclear manganese cluster, which is responsible for photosynthetic water oxidation. The polypeptide is Carboxyl-terminal-processing peptidase 1, chloroplastic (CTPA1) (Arabidopsis thaliana (Mouse-ear cress)).